Here is a 387-residue protein sequence, read N- to C-terminus: ATP-dependent Clp protease proteolytic subunit-related protein 1, chloroplastic (387 aa).

Residues 1–41 constitute a chloroplast transit peptide; it reads MATALVSPLTSQLNHEAVCSKFVLPKSPFMSGSKLFSSNMP. The segment covering 355–365 has biased composition (basic and acidic residues); that stretch reads QDSSFEKRDYD. The segment at 355–387 is disordered; that stretch reads QDSSFEKRDYDGTLAQRAMRPGGGSPAAPAGLR.

Belongs to the peptidase S14 family. As to quaternary structure, component of the chloroplastic Clp protease core complex which consist of at least 16 proteins: CLPP4 (3 copies), CLPP5 (3 copies), CLPR4 (2 copies), ClpP1 (1 copy), CLPP6 (1 copy), CLPR2 (1 copy), CLPT1 (1 copy), CLPT2 (1 copy) and 3 copies of CLPP3 and/or CLPR1 and/or CLPR3. The core complex is organized in two heptameric rings, one containing CLPP3,4,5,6 in a 1:2:3:1 ratio and the other CLPP1 and CLPR1,2,3,4 in a 3:1:1:1:1 ratio.

The protein localises to the plastid. Its subcellular location is the chloroplast stroma. In terms of biological role, required for chloroplast development and differentiation. This is ATP-dependent Clp protease proteolytic subunit-related protein 1, chloroplastic from Arabidopsis thaliana (Mouse-ear cress).